Here is a 236-residue protein sequence, read N- to C-terminus: Purine nucleoside phosphorylase DeoD-type (236 aa).

His-4 lines the a purine D-ribonucleoside pocket. Residues Gly-20, Arg-24, Arg-43, and 87–90 (RVGT) contribute to the phosphate site. A purine D-ribonucleoside is bound by residues 179-181 (EME) and 203-204 (SD). Asp-204 acts as the Proton donor in catalysis.

It belongs to the PNP/UDP phosphorylase family. In terms of assembly, homohexamer; trimer of homodimers.

It carries out the reaction a purine D-ribonucleoside + phosphate = a purine nucleobase + alpha-D-ribose 1-phosphate. The catalysed reaction is a purine 2'-deoxy-D-ribonucleoside + phosphate = a purine nucleobase + 2-deoxy-alpha-D-ribose 1-phosphate. Functionally, catalyzes the reversible phosphorolytic breakdown of the N-glycosidic bond in the beta-(deoxy)ribonucleoside molecules, with the formation of the corresponding free purine bases and pentose-1-phosphate. This chain is Purine nucleoside phosphorylase DeoD-type, found in Streptococcus pneumoniae (strain JJA).